Consider the following 476-residue polypeptide: uncharacterized protein (476 aa).

Residues 147-204 (DVRLAELRRRRAELEAEIAAVEAGDIAVLDPTAVRDRYQQLSTTARELLSDFREVEEN) adopt a coiled-coil conformation.

This is an uncharacterized protein from Mycolicibacterium smegmatis (strain ATCC 700084 / mc(2)155) (Mycobacterium smegmatis).